A 101-amino-acid chain; its full sequence is Small ribosomal subunit protein uS14 (101 aa).

Belongs to the universal ribosomal protein uS14 family. In terms of assembly, part of the 30S ribosomal subunit. Contacts proteins S3 and S10.

Functionally, binds 16S rRNA, required for the assembly of 30S particles and may also be responsible for determining the conformation of the 16S rRNA at the A site. The protein is Small ribosomal subunit protein uS14 of Shewanella frigidimarina (strain NCIMB 400).